The sequence spans 210 residues: MTFLKRVGEYVSDAFKAAKYIGQGMGVVFDHMNRRPVTVQYPFEKLIPSERFRGRIHFEFDKCIACEICVRVCPIDLPVVDWVYNTELKKKELYSYSIDFGVCIFCANCVEFCPTNCLSVTEDYELATYDRHELNYHQVALGRLPSKVTEDPMVTPLREFAYLPKGVIDPHDLPTGSQRAGKRPEEILAEMRAAKAAEAKEDKTAAEQSN.

4Fe-4S ferredoxin-type domains follow at residues 54-83 and 94-123; these read GRIHFEFDKCIACEICVRVCPIDLPVVDWV and YSYSIDFGVCIFCANCVEFCPTNCLSVTED. [4Fe-4S] cluster contacts are provided by Cys-63, Cys-66, Cys-69, Cys-73, Cys-103, Cys-106, Cys-109, and Cys-113.

It belongs to the complex I 23 kDa subunit family. As to quaternary structure, NDH-1 is composed of at least 11 different subunits. [4Fe-4S] cluster is required as a cofactor.

The protein localises to the cellular thylakoid membrane. It catalyses the reaction a plastoquinone + NADH + (n+1) H(+)(in) = a plastoquinol + NAD(+) + n H(+)(out). The catalysed reaction is a plastoquinone + NADPH + (n+1) H(+)(in) = a plastoquinol + NADP(+) + n H(+)(out). Its function is as follows. NDH-1 shuttles electrons from an unknown electron donor, via FMN and iron-sulfur (Fe-S) centers, to quinones in the respiratory and/or the photosynthetic chain. The immediate electron acceptor for the enzyme in this species is believed to be plastoquinone. Couples the redox reaction to proton translocation, and thus conserves the redox energy in a proton gradient. This chain is NAD(P)H-quinone oxidoreductase subunit I, found in Synechococcus sp. (strain JA-3-3Ab) (Cyanobacteria bacterium Yellowstone A-Prime).